A 251-amino-acid chain; its full sequence is uncharacterized protein (251 aa).

The HTH deoR-type domain occupies Thr3–Lys58. The segment at residues Val20–Asp39 is a DNA-binding region (H-T-H motif).

This is an uncharacterized protein from Bacillus subtilis (strain 168).